Consider the following 603-residue polypeptide: Aspartate--tRNA(Asp/Asn) ligase (603 aa).

Position 187 (glutamate 187) interacts with L-aspartate. The segment at 211–214 is aspartate; it reads QQFK. L-aspartate-binding residues include arginine 233 and histidine 461. 233–235 lines the ATP pocket; sequence RDE. Residue glutamate 495 participates in ATP binding. Arginine 502 provides a ligand contact to L-aspartate. 547 to 550 contacts ATP; it reads GLDR.

Belongs to the class-II aminoacyl-tRNA synthetase family. Type 1 subfamily. As to quaternary structure, homodimer.

The protein resides in the cytoplasm. The enzyme catalyses tRNA(Asx) + L-aspartate + ATP = L-aspartyl-tRNA(Asx) + AMP + diphosphate. Functionally, aspartyl-tRNA synthetase with relaxed tRNA specificity since it is able to aspartylate not only its cognate tRNA(Asp) but also tRNA(Asn). Reaction proceeds in two steps: L-aspartate is first activated by ATP to form Asp-AMP and then transferred to the acceptor end of tRNA(Asp/Asn). In Chlorobaculum parvum (strain DSM 263 / NCIMB 8327) (Chlorobium vibrioforme subsp. thiosulfatophilum), this protein is Aspartate--tRNA(Asp/Asn) ligase.